A 643-amino-acid polypeptide reads, in one-letter code: 1-deoxy-D-xylulose-5-phosphate synthase (643 aa).

Thiamine diphosphate-binding positions include His-72 and 113 to 115 (GHA). Mg(2+) is bound at residue Asp-144. Thiamine diphosphate-binding positions include 145 to 146 (GA), Asn-174, Tyr-287, and Glu-370. Asn-174 contacts Mg(2+).

This sequence belongs to the transketolase family. DXPS subfamily. Homodimer. Mg(2+) is required as a cofactor. Thiamine diphosphate serves as cofactor.

It catalyses the reaction D-glyceraldehyde 3-phosphate + pyruvate + H(+) = 1-deoxy-D-xylulose 5-phosphate + CO2. It participates in metabolic intermediate biosynthesis; 1-deoxy-D-xylulose 5-phosphate biosynthesis; 1-deoxy-D-xylulose 5-phosphate from D-glyceraldehyde 3-phosphate and pyruvate: step 1/1. In terms of biological role, catalyzes the acyloin condensation reaction between C atoms 2 and 3 of pyruvate and glyceraldehyde 3-phosphate to yield 1-deoxy-D-xylulose-5-phosphate (DXP). In Prochlorococcus marinus (strain SARG / CCMP1375 / SS120), this protein is 1-deoxy-D-xylulose-5-phosphate synthase.